We begin with the raw amino-acid sequence, 459 residues long: Ribulose bisphosphate carboxylase large chain (459 aa).

Lysine 4 bears the N6,N6,N6-trimethyllysine mark. Residues asparagine 113 and threonine 163 each coordinate substrate. The Proton acceptor role is filled by lysine 165. Substrate is bound at residue lysine 167. The Mg(2+) site is built by lysine 191, aspartate 193, and glutamate 194. An N6-carboxylysine modification is found at lysine 191. Residue histidine 284 is the Proton acceptor of the active site. Residues arginine 285, histidine 317, and serine 369 each contribute to the substrate site.

This sequence belongs to the RuBisCO large chain family. Type I subfamily. In terms of assembly, heterohexadecamer of 8 large chains and 8 small chains; disulfide-linked. The disulfide link is formed within the large subunit homodimers. Mg(2+) is required as a cofactor. Post-translationally, the disulfide bond which can form in the large chain dimeric partners within the hexadecamer appears to be associated with oxidative stress and protein turnover.

The protein resides in the plastid. The protein localises to the chloroplast. It carries out the reaction 2 (2R)-3-phosphoglycerate + 2 H(+) = D-ribulose 1,5-bisphosphate + CO2 + H2O. The catalysed reaction is D-ribulose 1,5-bisphosphate + O2 = 2-phosphoglycolate + (2R)-3-phosphoglycerate + 2 H(+). In terms of biological role, ruBisCO catalyzes two reactions: the carboxylation of D-ribulose 1,5-bisphosphate, the primary event in carbon dioxide fixation, as well as the oxidative fragmentation of the pentose substrate in the photorespiration process. Both reactions occur simultaneously and in competition at the same active site. The sequence is that of Ribulose bisphosphate carboxylase large chain from Apium graveolens (Celery).